The chain runs to 185 residues: Ribosome-recycling factor (185 aa).

It belongs to the RRF family.

The protein resides in the cytoplasm. Its function is as follows. Responsible for the release of ribosomes from messenger RNA at the termination of protein biosynthesis. May increase the efficiency of translation by recycling ribosomes from one round of translation to another. This Francisella tularensis subsp. tularensis (strain FSC 198) protein is Ribosome-recycling factor.